The chain runs to 535 residues: Peptide chain release factor 3 (535 aa).

The region spanning 8-278 is the tr-type G domain; the sequence is ARRRTFAIIS…VDQAPAPGPR (271 aa). GTP contacts are provided by residues 17–24, 85–89, and 139–142; these read SHPDAGKT, DTPGH, and NKLD.

The protein belongs to the TRAFAC class translation factor GTPase superfamily. Classic translation factor GTPase family. PrfC subfamily.

Its subcellular location is the cytoplasm. Increases the formation of ribosomal termination complexes and stimulates activities of RF-1 and RF-2. It binds guanine nucleotides and has strong preference for UGA stop codons. It may interact directly with the ribosome. The stimulation of RF-1 and RF-2 is significantly reduced by GTP and GDP, but not by GMP. This Bordetella parapertussis (strain 12822 / ATCC BAA-587 / NCTC 13253) protein is Peptide chain release factor 3.